Reading from the N-terminus, the 1188-residue chain is DNA-directed RNA polymerase subunit beta (1188 aa).

This sequence belongs to the RNA polymerase beta chain family. In terms of assembly, the RNAP catalytic core consists of 2 alpha, 1 beta, 1 beta' and 1 omega subunit. When a sigma factor is associated with the core the holoenzyme is formed, which can initiate transcription.

The enzyme catalyses RNA(n) + a ribonucleoside 5'-triphosphate = RNA(n+1) + diphosphate. DNA-dependent RNA polymerase catalyzes the transcription of DNA into RNA using the four ribonucleoside triphosphates as substrates. This chain is DNA-directed RNA polymerase subunit beta, found in Streptococcus equi subsp. equi (strain 4047).